The primary structure comprises 247 residues: Type III pantothenate kinase (247 aa).

6–13 (DVGNTHTT) is an ATP binding site. Residue 101-104 (GADR) coordinates substrate. The active-site Proton acceptor is the Asp-103. Asp-123 contributes to the K(+) binding site. Thr-126 serves as a coordination point for ATP. Thr-177 contributes to the substrate binding site.

This sequence belongs to the type III pantothenate kinase family. Homodimer. The cofactor is NH4(+). It depends on K(+) as a cofactor.

Its subcellular location is the cytoplasm. The catalysed reaction is (R)-pantothenate + ATP = (R)-4'-phosphopantothenate + ADP + H(+). It participates in cofactor biosynthesis; coenzyme A biosynthesis; CoA from (R)-pantothenate: step 1/5. In terms of biological role, catalyzes the phosphorylation of pantothenate (Pan), the first step in CoA biosynthesis. This chain is Type III pantothenate kinase, found in Thermosipho melanesiensis (strain DSM 12029 / CIP 104789 / BI429).